We begin with the raw amino-acid sequence, 227 residues long: TMF-regulated nuclear protein 1 (227 aa).

Disordered regions lie at residues 1 to 72 (MPGC…ELQR) and 200 to 227 (GRLRRGHGPEPDSPFRRSPPRGPASPQR). Residues 22–55 (SPPPPWDPMPSSQPPPPTPTLTPTPTPGQSPPLP) are compositionally biased toward pro residues.

Interacts with TMF1; may regulate TRNP1 proteasomal degradation. Ubiquitinated, leading to its degradation by the proteasome.

It localises to the nucleus. DNA-binding factor that regulates the expression of a subset of genes and plays a key role in tangential, radial, and lateral expansion of the brain neocortex. Regulates neural stem cells proliferation and the production of intermediate neural progenitors and basal radial glial cells affecting the process of cerebral cortex gyrification. May control the proliferation rate of cells by regulating their progression through key cell-cycle transition points. In Homo sapiens (Human), this protein is TMF-regulated nuclear protein 1 (TRNP1).